A 135-amino-acid polypeptide reads, in one-letter code: Small ribosomal subunit protein uS9 (135 aa).

This sequence belongs to the universal ribosomal protein uS9 family.

The protein is Small ribosomal subunit protein uS9 of Petrotoga mobilis (strain DSM 10674 / SJ95).